The chain runs to 1368 residues: DNA-directed RNA polymerase subunit beta (1368 aa).

Belongs to the RNA polymerase beta chain family. As to quaternary structure, the RNAP catalytic core consists of 2 alpha, 1 beta, 1 beta' and 1 omega subunit. When a sigma factor is associated with the core the holoenzyme is formed, which can initiate transcription.

The catalysed reaction is RNA(n) + a ribonucleoside 5'-triphosphate = RNA(n+1) + diphosphate. Its function is as follows. DNA-dependent RNA polymerase catalyzes the transcription of DNA into RNA using the four ribonucleoside triphosphates as substrates. This is DNA-directed RNA polymerase subunit beta from Burkholderia cenocepacia (strain ATCC BAA-245 / DSM 16553 / LMG 16656 / NCTC 13227 / J2315 / CF5610) (Burkholderia cepacia (strain J2315)).